Here is a 190-residue protein sequence, read N- to C-terminus: Nuclear transcription factor Y subunit B-2 (190 aa).

Residues 1 to 30 form a disordered region; it reads MGDSDRDSGGGQNGNNQNGQSSLSPREQDR. A DNA-binding region spans residues 32-38; sequence LPIANVS. Residues 59–70 form a subunit association domain (SAD) region; it reads MQECVSEFISFV. Residues 168–190 form a disordered region; it reads HMYGATGGGSDSGGGAASGRTRT. The segment covering 172-184 has biased composition (gly residues); sequence ATGGGSDSGGGAA.

It belongs to the NFYB/HAP3 subunit family. In terms of assembly, heterotrimeric transcription factor composed of three components, NF-YA, NF-YB and NF-YC. NF-YB and NF-YC must interact and dimerize for NF-YA association and DNA binding. Binds directly with DPB3-1. Ubiquitous. Predominantly expressed in flowers and siliques.

The protein localises to the nucleus. Functionally, component of the NF-Y/HAP transcription factor complex. The NF-Y complex stimulates the transcription of various genes by recognizing and binding to a CCAAT motif in promoters. The chain is Nuclear transcription factor Y subunit B-2 from Arabidopsis thaliana (Mouse-ear cress).